The following is a 188-amino-acid chain: Elongation factor P (188 aa).

This sequence belongs to the elongation factor P family.

It localises to the cytoplasm. Its pathway is protein biosynthesis; polypeptide chain elongation. Its function is as follows. Involved in peptide bond synthesis. Stimulates efficient translation and peptide-bond synthesis on native or reconstituted 70S ribosomes in vitro. Probably functions indirectly by altering the affinity of the ribosome for aminoacyl-tRNA, thus increasing their reactivity as acceptors for peptidyl transferase. The sequence is that of Elongation factor P from Stutzerimonas stutzeri (strain A1501) (Pseudomonas stutzeri).